A 406-amino-acid chain; its full sequence is Immediate early response gene 5-like protein (406 aa).

2 disordered regions span residues 166-195 and 216-235; these read QPPH…APAA and AAPS…PSSS. Residues 182–193 are compositionally biased toward pro residues; sequence QPGPAPLPPPAP.

The protein belongs to the IER family.

This chain is Immediate early response gene 5-like protein (Ier5l), found in Mus musculus (Mouse).